A 261-amino-acid chain; its full sequence is NAD(P)H-quinone oxidoreductase subunit K, chloroplastic (261 aa).

[4Fe-4S] cluster-binding residues include C43, C44, C108, and C139.

It belongs to the complex I 20 kDa subunit family. NDH is composed of at least 16 different subunits, 5 of which are encoded in the nucleus. [4Fe-4S] cluster is required as a cofactor.

It is found in the plastid. Its subcellular location is the chloroplast thylakoid membrane. The catalysed reaction is a plastoquinone + NADH + (n+1) H(+)(in) = a plastoquinol + NAD(+) + n H(+)(out). It carries out the reaction a plastoquinone + NADPH + (n+1) H(+)(in) = a plastoquinol + NADP(+) + n H(+)(out). NDH shuttles electrons from NAD(P)H:plastoquinone, via FMN and iron-sulfur (Fe-S) centers, to quinones in the photosynthetic chain and possibly in a chloroplast respiratory chain. The immediate electron acceptor for the enzyme in this species is believed to be plastoquinone. Couples the redox reaction to proton translocation, and thus conserves the redox energy in a proton gradient. This is NAD(P)H-quinone oxidoreductase subunit K, chloroplastic from Cycas taitungensis (Prince sago).